The chain runs to 209 residues: Uracil phosphoribosyltransferase (209 aa).

5-phospho-alpha-D-ribose 1-diphosphate is bound by residues R79, R104, and 131–139 (DPMLATGGS). Uracil contacts are provided by residues I194 and 199–201 (GDA). D200 is a 5-phospho-alpha-D-ribose 1-diphosphate binding site.

It belongs to the UPRTase family. The cofactor is Mg(2+).

It carries out the reaction UMP + diphosphate = 5-phospho-alpha-D-ribose 1-diphosphate + uracil. Its pathway is pyrimidine metabolism; UMP biosynthesis via salvage pathway; UMP from uracil: step 1/1. Its activity is regulated as follows. Allosterically activated by GTP. Its function is as follows. Catalyzes the conversion of uracil and 5-phospho-alpha-D-ribose 1-diphosphate (PRPP) to UMP and diphosphate. This Streptococcus pneumoniae (strain ATCC BAA-255 / R6) protein is Uracil phosphoribosyltransferase.